A 157-amino-acid chain; its full sequence is Probable succinate transporter subunit YjjB (157 aa).

The next 4 membrane-spanning stretches (helical) occupy residues 6 to 26, 55 to 75, 87 to 107, and 129 to 149; these read FFMA…GFAM, AGFN…SIGI, VFTV…TAMI, and FLKA…PGLW.

It belongs to the ThrE exporter (TC 2.A.79) family. As to quaternary structure, the transporter is composed of YjjB and YjjP.

It localises to the cell inner membrane. Functionally, involved in succinate export with YjjP. Both proteins are required for export. The protein is Probable succinate transporter subunit YjjB of Salmonella arizonae (strain ATCC BAA-731 / CDC346-86 / RSK2980).